Here is a 64-residue protein sequence, read N- to C-terminus: Disintegrin CV-11-beta (64 aa).

The Disintegrin domain occupies 1 to 64 (NSAHPCCDPV…SDCPRNPWKD (64 aa)). 4 disulfide bridges follow: C6/C29, C20/C26, C25/C50, and C38/C57. A Cell attachment site motif is present at residues 42 to 44 (RGD).

This sequence belongs to the disintegrin family. Dimeric disintegrin subfamily. Heterodimer with subunit alpha; disulfide-linked. Expressed by the venom gland.

It is found in the secreted. In terms of biological role, inhibits ADP-induced human platelet aggregation. Antagonist of alpha-IIb/beta-3 (ITGA2B/ITGB3). The sequence is that of Disintegrin CV-11-beta from Cerastes vipera (Sahara sand viper).